The following is a 335-amino-acid chain: Syntaxin-18 (335 aa).

The Cytoplasmic segment spans residues 1–309 (MAVDITLLFR…EDIREAIKNN (309 aa)). Residues 168-208 (KLEPEPNTKTRESTSSEKVSRSPSKDSEENPATEERPEKIL) show a composition bias toward basic and acidic residues. The segment at 168-226 (KLEPEPNTKTRESTSSEKVSRSPSKDSEENPATEERPEKILAETQPELGTWGDGKGEDE) is disordered. Residues 243–305 (IGEMNSLFDE…KEGNEDIREA (63 aa)) enclose the t-SNARE coiled-coil homology domain. A helical; Anchor for type IV membrane protein membrane pass occupies residues 310–330 (AGFRVWILFFLVMCSFSLLFL). Residues 331–335 (DWYDS) lie on the Vesicular side of the membrane.

Belongs to the syntaxin family. In terms of assembly, component of a SNARE complex consisting of STX18, USE1L, BNIP1/SEC20L, and SEC22B. RINT1/TIP20L and ZW10 are associated with the complex through interaction with BNIP1/SEC20L. Interacts directly with USE1L and BNIP1/SEC20L.

The protein resides in the endoplasmic reticulum membrane. It localises to the golgi apparatus membrane. Its function is as follows. Syntaxin that may be involved in targeting and fusion of Golgi-derived retrograde transport vesicles with the ER. The sequence is that of Syntaxin-18 (STX18) from Pongo abelii (Sumatran orangutan).